The following is a 389-amino-acid chain: Succinate--CoA ligase [ADP-forming] subunit beta (389 aa).

The ATP-grasp domain occupies 9 to 244; that stretch reads KELLRQFNVP…IDEEDAAEIE (236 aa). Residues Lys-46, 53–55, Glu-99, Ala-102, and Glu-107 contribute to the ATP site; that span reads GRG. Asn-199 and Asp-213 together coordinate Mg(2+). Substrate contacts are provided by residues Asn-264 and 321-323; that span reads GIM.

This sequence belongs to the succinate/malate CoA ligase beta subunit family. As to quaternary structure, heterotetramer of two alpha and two beta subunits. Mg(2+) is required as a cofactor.

It catalyses the reaction succinate + ATP + CoA = succinyl-CoA + ADP + phosphate. The catalysed reaction is GTP + succinate + CoA = succinyl-CoA + GDP + phosphate. It functions in the pathway carbohydrate metabolism; tricarboxylic acid cycle; succinate from succinyl-CoA (ligase route): step 1/1. Functionally, succinyl-CoA synthetase functions in the citric acid cycle (TCA), coupling the hydrolysis of succinyl-CoA to the synthesis of either ATP or GTP and thus represents the only step of substrate-level phosphorylation in the TCA. The beta subunit provides nucleotide specificity of the enzyme and binds the substrate succinate, while the binding sites for coenzyme A and phosphate are found in the alpha subunit. The sequence is that of Succinate--CoA ligase [ADP-forming] subunit beta from Polynucleobacter necessarius subsp. necessarius (strain STIR1).